The sequence spans 194 residues: Adenylate kinase isoenzyme 1 (194 aa).

Residue Met1 is modified to N-acetylmethionine. 18–23 (GSGKGT) serves as a coordination point for ATP. At Ser38 the chain carries Phosphoserine. The interval 38-67 (STGDLLRAEVSSGSARGKKLSEIMEKGQLV) is NMP. Residues Thr39, Arg44, 65–67 (QLV), 94–97 (GYPR), and Gln101 each bind AMP. Residues 131 to 141 (KRGETSGRVDD) form an LID region. Residue Arg132 coordinates ATP. The AMP site is built by Arg138 and Arg149. Residue Gly177 participates in ATP binding.

It belongs to the adenylate kinase family. AK1 subfamily. As to quaternary structure, monomer. It depends on Mg(2+) as a cofactor.

It is found in the cytoplasm. It catalyses the reaction a ribonucleoside 5'-phosphate + ATP = a ribonucleoside 5'-diphosphate + ADP. The enzyme catalyses AMP + ATP = 2 ADP. The catalysed reaction is dAMP + ATP = dADP + ADP. It carries out the reaction dATP + AMP = dADP + ADP. It catalyses the reaction dAMP + dATP = 2 dADP. The enzyme catalyses a 2'-deoxyribonucleoside 5'-diphosphate + ATP = a 2'-deoxyribonucleoside 5'-triphosphate + ADP. The catalysed reaction is a ribonucleoside 5'-diphosphate + ATP = a ribonucleoside 5'-triphosphate + ADP. It carries out the reaction CDP + GTP = CTP + GDP. It catalyses the reaction GDP + ATP = GTP + ADP. The enzyme catalyses UDP + ATP = UTP + ADP. The catalysed reaction is GTP + UDP = UTP + GDP. It carries out the reaction dTDP + GTP = dTTP + GDP. It catalyses the reaction dCDP + GTP = dCTP + GDP. The enzyme catalyses dGDP + ATP = dGTP + ADP. The catalysed reaction is dADP + GTP = dATP + GDP. It carries out the reaction thiamine diphosphate + ADP = thiamine triphosphate + AMP. Functionally, catalyzes the reversible transfer of the terminal phosphate group between ATP and AMP. Also displays broad nucleoside diphosphate kinase activity. Plays an important role in cellular energy homeostasis and in adenine nucleotide metabolism. Also catalyzes at a very low rate the synthesis of thiamine triphosphate (ThTP) from thiamine diphosphate (ThDP) and ADP. The sequence is that of Adenylate kinase isoenzyme 1 from Oryctolagus cuniculus (Rabbit).